A 153-amino-acid polypeptide reads, in one-letter code: Large ribosomal subunit protein uL15 (153 aa).

Residues 1–49 (MQLHNLYPFPEERKTRRRVGRGSGSGLGCTAGKGHKGQNARAGGGVAPG) form a disordered region. Over residues 21 to 31 (RGSGSGLGCTA) the composition is skewed to gly residues.

It belongs to the universal ribosomal protein uL15 family. In terms of assembly, part of the 50S ribosomal subunit.

In terms of biological role, binds to the 23S rRNA. This chain is Large ribosomal subunit protein uL15, found in Desulfovibrio desulfuricans (strain ATCC 27774 / DSM 6949 / MB).